Reading from the N-terminus, the 217-residue chain is Large ribosomal subunit protein uL1 (217 aa).

This sequence belongs to the universal ribosomal protein uL1 family.

This Eremothecium gossypii (strain ATCC 10895 / CBS 109.51 / FGSC 9923 / NRRL Y-1056) (Yeast) protein is Large ribosomal subunit protein uL1 (RPL10A).